We begin with the raw amino-acid sequence, 168 residues long: Probable prefoldin subunit 5 (168 aa).

It belongs to the prefoldin subunit alpha family. Heterohexamer of two PFD-alpha type and four PFD-beta type subunits.

In terms of biological role, binds specifically to cytosolic chaperonin (c-CPN) and transfers target proteins to it. Binds to nascent polypeptide chain and promotes folding in an environment in which there are many competing pathways for nonnative proteins. This is Probable prefoldin subunit 5 from Drosophila melanogaster (Fruit fly).